Reading from the N-terminus, the 408-residue chain is 8-amino-7-oxononanoate synthase (408 aa).

Arginine 20 contacts substrate. 117 to 118 (GY) provides a ligand contact to pyridoxal 5'-phosphate. A substrate-binding site is contributed by histidine 142. 3 residues coordinate pyridoxal 5'-phosphate: serine 188, histidine 216, and threonine 244. At lysine 247 the chain carries N6-(pyridoxal phosphate)lysine. Threonine 367 is a substrate binding site.

It belongs to the class-II pyridoxal-phosphate-dependent aminotransferase family. BioF subfamily. Homodimer. Requires pyridoxal 5'-phosphate as cofactor.

The enzyme catalyses 6-carboxyhexanoyl-[ACP] + L-alanine + H(+) = (8S)-8-amino-7-oxononanoate + holo-[ACP] + CO2. It functions in the pathway cofactor biosynthesis; biotin biosynthesis. Its function is as follows. Catalyzes the decarboxylative condensation of pimeloyl-[acyl-carrier protein] and L-alanine to produce 8-amino-7-oxononanoate (AON), [acyl-carrier protein], and carbon dioxide. The polypeptide is 8-amino-7-oxononanoate synthase (Cupriavidus pinatubonensis (strain JMP 134 / LMG 1197) (Cupriavidus necator (strain JMP 134))).